Here is a 262-residue protein sequence, read N- to C-terminus: Glycerol uptake facilitator protein (262 aa).

Topologically, residues 1–7 (MNFCSKK) are cytoplasmic. Residues 8 to 36 (KILKQCFFEFLGTGLIIFLGISSLVVSKL) form a helical membrane-spanning segment. Residues 37–41 (TNFHF) lie on the Extracellular side of the membrane. The chain crosses the membrane as a helical span at residues 42 to 62 (NHCEISCIWGLGVFISICFCS). Topologically, residues 63 to 65 (SVS) are cytoplasmic. An intramembrane segment occupies 66–69 (GAHL). The NPA 1 signature appears at 70–72 (NPA). Positions 70 to 80 (NPAITIFLFLS) form an intramembrane region, helical. Over 81-86 (SQFNKK) the chain is Cytoplasmic. The chain crosses the membrane as a helical span at residues 87–110 (KVIPYILSQISGTFFFTFLIYLIF). At 111 to 145 (NNLLNSFESKYNIVRGTKKSLELASLFCVFPKENY) the chain is on the extracellular side. Residues 146 to 171 (NFIHDFILEILIGIIFIIILMKLSEK) form a helical membrane-spanning segment. The Cytoplasmic segment spans residues 172–180 (NNLFKFYKF). A helical membrane pass occupies residues 181 to 197 (INPFLIGTLVIIINLFL). Topologically, residues 198–201 (TSYS) are extracellular. Residues 202–205 (NITL) lie within the membrane without spanning it. The NPA 2 signature appears at 206–208 (NPA). Residues 206–219 (NPARDLGPRIFLSL) constitute an intramembrane region (helical). Topologically, residues 220–234 (IGWGKLAFTGDDNII) are extracellular. A helical membrane pass occupies residues 235 to 259 (FPYFLIPTIAPIIGINLGGWIYILY). Topologically, residues 260–262 (IKK) are cytoplasmic.

It belongs to the MIP/aquaporin (TC 1.A.8) family.

It localises to the cell membrane. The catalysed reaction is glycerol(in) = glycerol(out). Functionally, mediates glycerol diffusion across the cytoplasmic membrane via a pore-type mechanism. The protein is Glycerol uptake facilitator protein (glpF) of Buchnera aphidicola subsp. Schizaphis graminum (strain Sg).